Here is a 211-residue protein sequence, read N- to C-terminus: Ribonuclease HII (211 aa).

The 195-residue stretch at 17 to 211 (FLSAGVDEVG…CQPSLFEVRS (195 aa)) folds into the RNase H type-2 domain. Residues Asp-23, Glu-24, and Asp-119 each coordinate a divalent metal cation.

Belongs to the RNase HII family. Mn(2+) is required as a cofactor. It depends on Mg(2+) as a cofactor.

It localises to the cytoplasm. The catalysed reaction is Endonucleolytic cleavage to 5'-phosphomonoester.. Its function is as follows. Endonuclease that specifically degrades the RNA of RNA-DNA hybrids. The protein is Ribonuclease HII of Trichodesmium erythraeum (strain IMS101).